The following is a 1353-amino-acid chain: Adenylate cyclase type 9 (1353 aa).

2 disordered regions span residues 1 to 27 (MASP…DSNS) and 49 to 71 (SISS…GGGG). Over 1-117 (MASPPHQQLL…CFPQTQRRFR (117 aa)) the chain is Cytoplasmic. Residues 16-27 (EVSCDSSGDSNS) are compositionally biased toward polar residues. Residues 49–66 (SISSSCSSSGDSGGVPRR) are compositionally biased toward low complexity. A helical membrane pass occupies residues 118–138 (YALFYIGFACLLWSIYFAVHM). Residues 139–141 (RSR) lie on the Extracellular side of the membrane. Residues 142-162 (LIVMVAPALCFLLVCVGFFLF) traverse the membrane as a helical segment. At 163-171 (TFTKLYARH) the chain is on the cytoplasmic side. Residues 172–192 (YAWTSLALTLLVFALTLAAQF) traverse the membrane as a helical segment. At 193–215 (QVLTPVSGRGDSSNLTATARPTD) the chain is on the extracellular side. The N-linked (GlcNAc...) asparagine glycan is linked to Asn-206. The chain crosses the membrane as a helical span at residues 216–235 (TCLSQVGSFSMCIEVLFLLY). At 236-241 (TVMHLP) the chain is on the cytoplasmic side. A helical transmembrane segment spans residues 242-259 (LYLSLCLGVAYSVLFETF). Residues 260-280 (GYHFRDEACFPSPGAGALHWE) lie on the Extracellular side of the membrane. A helical membrane pass occupies residues 281-301 (LLSRGLLHGCIHAIGVHLFVM). Residues 302 to 786 (SQVRSRSTFL…VKTFASPTFS (485 aa)) are Cytoplasmic-facing. The disordered stretch occupies residues 349–375 (QGDEESENSVKRHATSSPKNRKKKSSI). Basic residues predominate over residues 359–374 (KRHATSSPKNRKKKSS). Positions 394 to 521 (SILFADIVGF…NDVNLANLME (128 aa)) constitute a Guanylate cyclase 1 domain. 3 residues coordinate Mg(2+): Asp-399, Ile-400, and Asp-443. Residues 399 to 404 (DIVGFT), 441 to 443 (LGD), and Arg-487 contribute to the ATP site. Residue Ser-610 is modified to Phosphoserine. The segment at 642 to 684 (EAGAEGGAPQNGCQDEHKNSTKASGGPNPKTQNGLLSPPQEEK) is disordered. 3 positions are modified to phosphoserine: Ser-688, Ser-691, and Ser-706. A helical membrane pass occupies residues 787–807 (SLLDVFLSTTVFLTLSTTCFL). Residues 808 to 818 (KYEAATVPPPP) are Extracellular-facing. Residues 819-839 (AALAVFSAALLLEVLSLAVSI) traverse the membrane as a helical segment. The Cytoplasmic portion of the chain corresponds to 840 to 867 (RMVFFLEDVMACTKRLLEWIAGWLPRHC). The chain crosses the membrane as a helical span at residues 868-888 (IGAILVSLPALAVYSHVTSEY). The Extracellular segment spans residues 889–891 (ETN). The helical transmembrane segment at 892 to 912 (IHFPVFTGSAALIAVVHYCNF) threads the bilayer. The Cytoplasmic portion of the chain corresponds to 913–920 (CQLSSWMR). A helical transmembrane segment spans residues 921 to 941 (SSLATVVGAGPLLLLYVSLCP). Residues 942–975 (DSSVLTSPLDAVQNFSSERNPCNSSVPRDLRRPA) lie on the Extracellular side of the membrane. 2 N-linked (GlcNAc...) asparagine glycosylation sites follow: Asn-955 and Asn-964. Residues 976-996 (SLIGQEVVLVFFLLLLLVWFL) form a helical membrane-spanning segment. At 997-1353 (NREFEVSYRL…LTKLNVSKSV (357 aa)) the chain is on the cytoplasmic side. Residues 1058-1198 (GVIFASIVNF…DTVNIASRMD (141 aa)) form the Guanylate cyclase 2 domain. ATP is bound by residues Lys-1108, 1185-1187 (DIW), 1192-1196 (NIASR), and Lys-1232. A phosphoserine mark is found at Ser-1257, Ser-1259, Ser-1295, and Ser-1307. The segment covering 1292 to 1301 (SLGSDSSTQA) has biased composition (polar residues). Positions 1292–1326 (SLGSDSSTQAKDAHLSPKRPWKEPVKAEERGRFGK) are disordered. Residues 1302-1326 (KDAHLSPKRPWKEPVKAEERGRFGK) show a composition bias toward basic and acidic residues.

This sequence belongs to the adenylyl cyclase class-4/guanylyl cyclase family. It depends on Mg(2+) as a cofactor. Mn(2+) serves as cofactor. As to expression, detected in skeletal muscle, pancreas, lung, heart, kidney, liver, brain and placenta. Expressed in multiple cells of the lung, with expression highest in airway smooth muscle.

It is found in the cell membrane. It carries out the reaction ATP = 3',5'-cyclic AMP + diphosphate. Its activity is regulated as follows. Insensitive to calcium/calmodulin, forskolin and somatostatin. Stimulated by beta-adrenergic receptor activation. Activity is down-regulated by calcium/calcineurin. Adenylyl cyclase that catalyzes the formation of the signaling molecule cAMP in response to activation of G protein-coupled receptors. Contributes to signaling cascades activated by CRH (corticotropin-releasing factor), corticosteroids and beta-adrenergic receptors. The chain is Adenylate cyclase type 9 (ADCY9) from Homo sapiens (Human).